We begin with the raw amino-acid sequence, 411 residues long: Growth-regulating factor 7 (411 aa).

In terms of domain architecture, QLQ spans 38 to 73; sequence PFTPTQWMELEHQALIYKHIVANAPVPAGLLLPIRR. Residues 108–152 enclose the WRC domain; sequence DSEPGRCRRTDGKKWRCSRDAVVDQKYCERHINRGRHRSRKHVEG. 2 consecutive short sequence motifs (bipartite nuclear localization signal) follow at residues 113 to 123 and 141 to 148; these read RCRRTDGKKWR and RGRHRSRK. The tract at residues 333-369 is disordered; that stretch reads FFTNTSSASDDKGKSRHPPSLNLLADGHTTSPQLQSP. Over residues 360–369 the composition is skewed to polar residues; sequence HTTSPQLQSP.

The protein belongs to the GRF family.

It is found in the nucleus. Its function is as follows. Transcription activator that plays a regulatory role in gibberellin-induced stem elongation. This Oryza sativa subsp. japonica (Rice) protein is Growth-regulating factor 7 (GRF7).